Reading from the N-terminus, the 117-residue chain is U9-theraphotoxin-Hhn1a (117 aa).

An N-terminal signal peptide occupies residues 1–21 (MNTVRVTFLLVFVLAVSLGQA). Positions 22-75 (DEDGNRMEMRQEIEKTEADSSYFAENLLLQKLEELEAKLWEETSEESRNSRQKR) are excised as a propeptide. Cystine bridges form between cysteine 76-cysteine 94, cysteine 83-cysteine 99, and cysteine 93-cysteine 114.

This sequence belongs to the neurotoxin 14 (magi-1) family. 01 (HNTX-16) subfamily. Expressed by the venom gland.

It is found in the secreted. Probable ion channel inhibitor. The chain is U9-theraphotoxin-Hhn1a from Cyriopagopus hainanus (Chinese bird spider).